Consider the following 149-residue polypeptide: L-alanine exporter AlaE (149 aa).

4 helical membrane passes run 16–36, 46–66, 85–105, and 112–132; these read FAMVVYCSVVNMCIEVFLSGM, LVAIPVNILIAWPYGMYRDLF, ILAYVTFQSPVYVAILLVVGA, and AAVSSNIVVSMLMGAVYGYFL.

The protein belongs to the AlaE exporter family.

It localises to the cell inner membrane. Exports L-alanine. This is L-alanine exporter AlaE from Shigella flexneri.